We begin with the raw amino-acid sequence, 399 residues long: Tyrosine--tRNA ligase (399 aa).

The 'HIGH' region motif lies at 42 to 51 (PTAPDIHLGH). The 'KMSKS' region motif lies at 226–230 (KMSKS). Residue K229 coordinates ATP. Positions 337–398 (LTIGYILQRA…GKRRFAKVKV (62 aa)) constitute an S4 RNA-binding domain.

It belongs to the class-I aminoacyl-tRNA synthetase family. TyrS type 2 subfamily. As to quaternary structure, homodimer.

The protein resides in the cytoplasm. It carries out the reaction tRNA(Tyr) + L-tyrosine + ATP = L-tyrosyl-tRNA(Tyr) + AMP + diphosphate + H(+). Its function is as follows. Catalyzes the attachment of tyrosine to tRNA(Tyr) in a two-step reaction: tyrosine is first activated by ATP to form Tyr-AMP and then transferred to the acceptor end of tRNA(Tyr). This Coxiella burnetii (strain RSA 493 / Nine Mile phase I) protein is Tyrosine--tRNA ligase.